The sequence spans 634 residues: DNA-directed RNA polymerase subunit gamma (634 aa).

Zn(2+)-binding residues include Cys-74, Cys-76, Cys-89, and Cys-92. Residues Asp-471, Asp-473, and Asp-475 each coordinate Mg(2+).

This sequence belongs to the RNA polymerase beta' chain family. RpoC1 subfamily. In terms of assembly, in cyanobacteria the RNAP catalytic core is composed of 2 alpha, 1 beta, 1 beta', 1 gamma and 1 omega subunit. When a sigma factor is associated with the core the holoenzyme is formed, which can initiate transcription. It depends on Mg(2+) as a cofactor. Zn(2+) is required as a cofactor.

It catalyses the reaction RNA(n) + a ribonucleoside 5'-triphosphate = RNA(n+1) + diphosphate. In terms of biological role, DNA-dependent RNA polymerase catalyzes the transcription of DNA into RNA using the four ribonucleoside triphosphates as substrates. The chain is DNA-directed RNA polymerase subunit gamma from Parasynechococcus marenigrum (strain WH8102).